A 579-amino-acid chain; its full sequence is A-type ATP synthase subunit A (579 aa).

229–236 (GPFGSGKT) is an ATP binding site.

This sequence belongs to the ATPase alpha/beta chains family. Has multiple subunits with at least A(3), B(3), C, D, E, F, H, I and proteolipid K(x).

The protein localises to the cell membrane. It carries out the reaction ATP + H2O + 4 H(+)(in) = ADP + phosphate + 5 H(+)(out). In terms of biological role, component of the A-type ATP synthase that produces ATP from ADP in the presence of a proton gradient across the membrane. The A chain is the catalytic subunit. In Methanocella arvoryzae (strain DSM 22066 / NBRC 105507 / MRE50), this protein is A-type ATP synthase subunit A.